The sequence spans 297 residues: L-threonate dehydrogenase (297 aa).

NAD(+) contacts are provided by residues 3–31 (RNIGVIGLGAMGFGVAQSLLRAGFNVHAC) and Thr-97. Lys-173 is an active-site residue. Residue Lys-241 coordinates NAD(+).

This sequence belongs to the HIBADH-related family. L-threonate dehydrogenase subfamily.

It catalyses the reaction L-threonate + NAD(+) = 2-dehydro-L-erythronate + NADH + H(+). In terms of biological role, catalyzes oxidation of L-threonate to 2-oxo-tetronate. Can use either NAD(+) or NADP(+) as cosubstrate, with a preference for NAD(+). The polypeptide is L-threonate dehydrogenase (Cupriavidus necator (strain ATCC 17699 / DSM 428 / KCTC 22496 / NCIMB 10442 / H16 / Stanier 337) (Ralstonia eutropha)).